Consider the following 465-residue polypeptide: MSEKETNTTSTENKEKEKQEQTNTNSTTESTNNQVDEEYERPGRSEGLDEFGIQLDIQQSDPNSPLYSVKTFEELGLKPELLKGVYAMGYNKPSKIQEAALPIIIQSPNNLIAQSQSGTGKTAAFTLGMLNCVDPSINAPQAICISPTKELALQTFEVISKIGQFSNIKPLLYISEIEVPKNVTNQVIIGTPGKILENVIKKQLSVKFLKMVVLDEADFIVKMKNVPNQIAMINRLLPSNVKVCLFSATFSMGVEELIKKIVQDPYTSIRLKRQELSVEKIHQYFIDCGSEDNKALILSDIYGFISVGQSIVFVHTIATAKSVHQKMVDEGHSVSLLYGKDLTTEERFKQIKDFKDGKSKVLITTNVLARGIDIPQVSLVINYDVPLDEMGKPDPVHYLHRIGRVGRFGRSGVALSFVYDQQSTNKLMNISTHLGVPLKELKSSEIESLDGILKGIRNQLTPLNN.

The span at 1 to 20 shows a compositional bias: basic and acidic residues; the sequence is MSEKETNTTSTENKEKEKQE. The tract at residues 1–45 is disordered; the sequence is MSEKETNTTSTENKEKEKQEQTNTNSTTESTNNQVDEEYERPGRS. The span at 21-34 shows a compositional bias: low complexity; that stretch reads QTNTNSTTESTNNQ. A Q motif motif is present at residues 70–98; sequence KTFEELGLKPELLKGVYAMGYNKPSKIQE. The Helicase ATP-binding domain maps to 102–268; that stretch reads PIIIQSPNNL…KKIVQDPYTS (167 aa). 115-122 lines the ATP pocket; that stretch reads SQSGTGKT. Residues 215–218 carry the DEAD box motif; it reads DEAD. Positions 297–449 constitute a Helicase C-terminal domain; it reads ILSDIYGFIS…ELKSSEIESL (153 aa).

Belongs to the DEAD box helicase family. DDX19/DBP5 subfamily.

The enzyme catalyses ATP + H2O = ADP + phosphate + H(+). ATP-binding RNA helicase required for normal differentiation and development. The polypeptide is ATP-dependent RNA helicase ddx19 (helC) (Dictyostelium discoideum (Social amoeba)).